A 70-amino-acid polypeptide reads, in one-letter code: SPbeta prophage-derived uncharacterized HTH-type transcriptional regulator YopO (70 aa).

In terms of domain architecture, HTH cro/C1-type spans 5–59 (IKQLMVKRGITIEELSRETMIDMQTLNKIIEMPDESDVTTIKLIALVLNVSIDEL). The segment at residues 16-35 (IEELSRETMIDMQTLNKIIE) is a DNA-binding region (H-T-H motif).

In Bacillus subtilis (strain 168), this protein is SPbeta prophage-derived uncharacterized HTH-type transcriptional regulator YopO (yopO).